The primary structure comprises 178 residues: MTTGLPSQTQVIELLGGEFARAGYEIEDVVIDAHARPPRITVIADGDDGLDLDAAATLSRSASALLDKLDTIEDHYVLEVSSPGVDRPLRTPKHFRRARGRKVDVVLSDNSTVTGRVGETGDDTIALVVRAGRDWAIREIPLGDVVKAVVQVEFSPPAQAELELAGVGGTDKTEERRK.

Belongs to the RimP family.

The protein localises to the cytoplasm. Its function is as follows. Required for maturation of 30S ribosomal subunits. The protein is Ribosome maturation factor RimP of Mycolicibacterium paratuberculosis (strain ATCC BAA-968 / K-10) (Mycobacterium paratuberculosis).